Here is a 186-residue protein sequence, read N- to C-terminus: Ribosome-recycling factor (186 aa).

This sequence belongs to the RRF family.

It is found in the cytoplasm. Responsible for the release of ribosomes from messenger RNA at the termination of protein biosynthesis. May increase the efficiency of translation by recycling ribosomes from one round of translation to another. The sequence is that of Ribosome-recycling factor from Rickettsia rickettsii (strain Iowa).